The sequence spans 149 residues: Macrodomain Ter protein (149 aa).

It belongs to the MatP family. As to quaternary structure, homodimer.

The protein resides in the cytoplasm. Its function is as follows. Required for spatial organization of the terminus region of the chromosome (Ter macrodomain) during the cell cycle. Prevents early segregation of duplicated Ter macrodomains during cell division. Binds specifically to matS, which is a 13 bp signature motif repeated within the Ter macrodomain. The polypeptide is Macrodomain Ter protein (Vibrio vulnificus (strain YJ016)).